The following is a 409-amino-acid chain: DEP domain-containing mTOR-interacting protein (409 aa).

The residue at position 1 (M1) is an N-acetylmethionine. The segment at 1–25 (MEEGGSTGSAGSDSSTSGSGGAQQR) is disordered. DEP domains lie at 36 to 119 (TGEQ…RFRK) and 145 to 219 (SPEN…QFRM). The DDEX motif signature appears at 217 to 235 (FRMNFRRRRRLMELLNEKS). A Phosphoserine; by MAPK3 modification is found at S235. At T241 the chain carries Phosphothreonine. Phosphoserine is present on residues S244 and S258. Residue T259 is modified to Phosphothreonine. S263, S265, S280, S282, and S283 each carry phosphoserine. Phosphoserine; by CK1 occurs at positions 286 and 287. Residues 286-291 (SSGYFS) carry the BetaTrCP degron motif motif. Position 289 is a phosphotyrosine; by SYK (Y289). S291 bears the Phosphoserine; by CK1 mark. S293 is modified (phosphoserine; by MTOR). Residue T295 is modified to Phosphothreonine; by MTOR. Phosphoserine is present on residues S297 and S298. A Phosphoserine; by MTOR modification is found at S299. The PDZ domain maps to 330–407 (TFTIVGDAVG…TIVMEVMEEL (78 aa)).

As to quaternary structure, associated component of the mechanistic target of rapamycin complex 1 (mTORC1) which contains MTOR, MLST8 and RPTOR. Associated component of the mechanistic target of rapamycin complex 2 (mTORC2) which contains MTOR, MLST8, PROTOR1, RICTOR, MAPKAP1 and DEPTOR. Interacts (via PDZ domain) with MTOR; interacts with MTOR within both mTORC1 and mTORC2. Interacts (via PDZ domain) with MINAR1 (via N-terminus). Interacts with SIK3. Post-translationally, phosphorylation weakens interaction with MTOR within mTORC1 and mTORC2. Phosphorylated at Ser-286, Ser-287 and Ser-291 in response to mitogenic stimulation by MTOR: DEPTOR is either directly phosphorylated by MTOR or indirectly via proteins kinases that are activated by MTOR, such as CK1/CSNK1A1. Phosphorylation at Ser-286, Ser-287 and Ser-291 promotes ubiquitination by the SCF(BTRC) complex, followed by degradation. Phosphorylation at Ser-235 by MAPK3/ERK1 promotes deubiquitination by USP7, enhancing its stability. Phosphorylation at Tyr-289 by SYK impairs its interaction with MTOR, promoting mTORC1 and mTORC2 signaling. In terms of processing, ubiquitinated; leading to proteasomal degradation. Ubiquitination by the SCF(BTRC) and SCF(FBXW11) complexes following phosphorylation at Ser-286, Ser-287 and Ser-291 by MTOR, leads to its degradation by the proteasome. Deubiquitinated by OTUB1 in response to amino acid via a non-canonical mechanism, leading to DEPTOR stability. Deubiquitinated by USP7 following phosphorylation at Ser-235, promoting its stability.

It localises to the lysosome membrane. With respect to regulation, inhibited upon phosphatidic acid-binding: phosphatidic acid produced upon mitogenic stimulation promotes DEPTOR dissociatiom from the mTORC1 and mTORC2 complexes, leading to their activation. Specifically binds unsaturated phosphatidic acid, such as 16:0-18:1, 18:0-18:1 and di-18:1. Inhibited when nutrients are present via a feedback loop: phosphorylation by MTOR promotes DEPTOR ubiquitination and degradation. In terms of biological role, negative regulator of the mTORC1 and mTORC2 complexes: inhibits the protein kinase activity of MTOR, thereby inactivating both complexes. DEPTOR inhibits mTORC1 and mTORC2 to induce autophagy. In contrast to AKT1S1/PRAS40, only partially inhibits mTORC1 activity. In Homo sapiens (Human), this protein is DEP domain-containing mTOR-interacting protein.